The sequence spans 104 residues: Circadian clock oscillator protein KaiB (104 aa).

Belongs to the KaiB family. As to quaternary structure, the KaiABC complex composition changes during the circadian cycle to control KaiC phosphorylation. Complexes KaiC(6), KaiA(2-4):KaiC(6), KaiB(6):KaiC(6) and KaiC(6):KaiB(6):KaiA(12) are among the most important forms, many form cooperatively. Undergoes a major conformational rearrangment; in the free state forms homotetramers as a dimer of dimers. When bound to the CI domain of KaiC switches to a monomeric thioredoxin-fold (KaiB(fs)). KaiB(fs) binds CikA, leading it to dephosphorylate phospho-RpaA.

Its function is as follows. Key component of the KaiABC oscillator complex, which constitutes the main circadian regulator in cyanobacteria. Complex composition changes during the circadian cycle to control KaiC phosphorylation. KaiA stimulates KaiC autophosphorylation, while KaiB sequesters KaiA, leading to KaiC autodephosphorylation. Phospho-Ser-431 KaiC accumulation triggers binding of KaiB to form the KaiB(6):KaiC(6) complex, leading to changes in output regulators CikA and SasA. KaiB switches to a thioredoxin-like fold (KaiB(fs)) when bound to KaiC. KaiB(6):KaiC(6) formation exposes a site for KaiA binding that sequesters KaiA from KaiC, making the KaiC(6):KaiB(6):KaiA(12) complex that results in KaiC autodephosphorylation. A metamorphic protein which reversibly switches between an inactive tetrameric fold and a rare, thioredoxin-like monomeric fold (KaiB(fs)). KaiB(fs) binds phospho-KaiC, KaiA and CikA. KaiA and CikA compete for binding to KaiB(fs), and KaiB(fs) and SasA compete for binding to KaiC, thus the clock oscillator and output signal pathway are tightly coupled. This is Circadian clock oscillator protein KaiB from Microcystis aeruginosa (strain NIES-843 / IAM M-2473).